Reading from the N-terminus, the 377-residue chain is Probable pectin lyase D (377 aa).

The first 17 residues, 1–17 (MRVSAFALLAAAATAAA), serve as a signal peptide directing secretion. 2 disulfides stabilise this stretch: C80–C99 and C89–C223. Residue N126 is glycosylated (N-linked (GlcNAc...) asparagine). The active site involves R253. C321 and C329 are oxidised to a cystine.

Belongs to the polysaccharide lyase 1 family.

Its subcellular location is the secreted. It catalyses the reaction Eliminative cleavage of (1-&gt;4)-alpha-D-galacturonan methyl ester to give oligosaccharides with 4-deoxy-6-O-methyl-alpha-D-galact-4-enuronosyl groups at their non-reducing ends.. Functionally, pectinolytic enzymes consist of four classes of enzymes: pectin lyase, polygalacturonase, pectin methylesterase and rhamnogalacturonase. Among pectinolytic enzymes, pectin lyase is the most important in depolymerization of pectin, since it cleaves internal glycosidic bonds of highly methylated pectins. This is Probable pectin lyase D (pelD) from Emericella nidulans (strain FGSC A4 / ATCC 38163 / CBS 112.46 / NRRL 194 / M139) (Aspergillus nidulans).